A 499-amino-acid chain; its full sequence is MTTTLPAYDEVVPRYEPVIGLETHVELGTNTKMFCGCPTDFGGAPNTRVCPVCLGLPGSLPVANRAAVEATIRIGLALNCSIAQWCRFARKNYYYPDMPKNFQISQYDEPLCVDGYLDVEVNGEPVRIGIERVHLEEDTGKTLHVGGATGRIHGATESLVDYNRAGIPLVEIVTKPIPGTGAMAPEVARAYVTELRDVLRSLGVSDVRMEEGSLRCDVNTSLNPPGEQWGTRTETKNVNSLRSVERAVRSEMIRQASVLDAGGRIVQETRHFHEETGDTTSGRSKETATDYRYFPEPDLVPIAPDPTWVAELKAELPELPRLHRRRLQQEWGLSDLDMQSILNAGAVELIEATIAAGATPAAARKWWLGELSRRANETGAELADIGATPGQVAELQGLVDAGKLTDKLARTVLEHVVAGEGSPAEIMAARNLEVVSDTGALTAAVDEAIAANPAIADKVRGGKVAAAGALVGAVMKTTRGQADAKTVRELILERLGAQG.

The protein belongs to the GatB/GatE family. GatB subfamily. As to quaternary structure, heterotrimer of A, B and C subunits.

The enzyme catalyses L-glutamyl-tRNA(Gln) + L-glutamine + ATP + H2O = L-glutaminyl-tRNA(Gln) + L-glutamate + ADP + phosphate + H(+). The catalysed reaction is L-aspartyl-tRNA(Asn) + L-glutamine + ATP + H2O = L-asparaginyl-tRNA(Asn) + L-glutamate + ADP + phosphate + 2 H(+). Allows the formation of correctly charged Asn-tRNA(Asn) or Gln-tRNA(Gln) through the transamidation of misacylated Asp-tRNA(Asn) or Glu-tRNA(Gln) in organisms which lack either or both of asparaginyl-tRNA or glutaminyl-tRNA synthetases. The reaction takes place in the presence of glutamine and ATP through an activated phospho-Asp-tRNA(Asn) or phospho-Glu-tRNA(Gln). This is Aspartyl/glutamyl-tRNA(Asn/Gln) amidotransferase subunit B from Salinispora arenicola (strain CNS-205).